Reading from the N-terminus, the 88-residue chain is Cell division topological specificity factor (88 aa).

It belongs to the MinE family.

In terms of biological role, prevents the cell division inhibition by proteins MinC and MinD at internal division sites while permitting inhibition at polar sites. This ensures cell division at the proper site by restricting the formation of a division septum at the midpoint of the long axis of the cell. The sequence is that of Cell division topological specificity factor from Aeromonas hydrophila subsp. hydrophila (strain ATCC 7966 / DSM 30187 / BCRC 13018 / CCUG 14551 / JCM 1027 / KCTC 2358 / NCIMB 9240 / NCTC 8049).